A 239-amino-acid polypeptide reads, in one-letter code: NAD-dependent protein deacylase (239 aa).

A Deacetylase sirtuin-type domain is found at 1-239 (MNVLILTGAG…PKLLNHFSAM (239 aa)). 8–27 (GAGISAESGIPTFRDANGLW) provides a ligand contact to NAD(+). Substrate-binding residues include tyrosine 52 and arginine 55. 93–96 (QNID) provides a ligand contact to NAD(+). Histidine 111 functions as the Proton acceptor in the catalytic mechanism. Residues 182–184 (GTS), 207–209 (NLD), and alanine 225 each bind NAD(+).

The protein belongs to the sirtuin family. Class III subfamily.

The protein resides in the cytoplasm. It catalyses the reaction N(6)-acetyl-L-lysyl-[protein] + NAD(+) + H2O = 2''-O-acetyl-ADP-D-ribose + nicotinamide + L-lysyl-[protein]. It carries out the reaction N(6)-succinyl-L-lysyl-[protein] + NAD(+) + H2O = 2''-O-succinyl-ADP-D-ribose + nicotinamide + L-lysyl-[protein]. In terms of biological role, NAD-dependent lysine deacetylase and desuccinylase that specifically removes acetyl and succinyl groups on target proteins. Modulates the activities of several proteins which are inactive in their acylated form. This is NAD-dependent protein deacylase from Rhodopirellula baltica (strain DSM 10527 / NCIMB 13988 / SH1).